A 288-amino-acid polypeptide reads, in one-letter code: UTP--glucose-1-phosphate uridylyltransferase (288 aa).

It belongs to the UDPGP type 2 family.

The enzyme catalyses alpha-D-glucose 1-phosphate + UTP + H(+) = UDP-alpha-D-glucose + diphosphate. It participates in glycolipid metabolism; diglucosyl-diacylglycerol biosynthesis. Its function is as follows. Catalyzes the formation of UDP-glucose from glucose-1-phosphate and UTP. This is an intermediate step in the biosynthesis of diglucosyl-diacylglycerol (Glc2-DAG), i.e. a glycolipid found in the membrane, which is also used as a membrane anchor for lipoteichoic acid (LTA). The polypeptide is UTP--glucose-1-phosphate uridylyltransferase (gtaB) (Staphylococcus haemolyticus (strain JCSC1435)).